A 118-amino-acid chain; its full sequence is Basic phospholipase A2 PA-11 (118 aa).

7 cysteine pairs are disulfide-bonded: Cys-11–Cys-71, Cys-27–Cys-117, Cys-29–Cys-45, Cys-44–Cys-98, Cys-51–Cys-91, Cys-60–Cys-84, and Cys-78–Cys-89. Ca(2+) contacts are provided by Tyr-28, Gly-30, and Gly-32. Residue His-48 is part of the active site. Residue Asp-49 coordinates Ca(2+). Asp-92 is a catalytic residue.

It belongs to the phospholipase A2 family. Group I subfamily. D49 sub-subfamily. Ca(2+) is required as a cofactor. As to expression, expressed by the venom gland.

The protein resides in the secreted. The enzyme catalyses a 1,2-diacyl-sn-glycero-3-phosphocholine + H2O = a 1-acyl-sn-glycero-3-phosphocholine + a fatty acid + H(+). Its function is as follows. PLA2 catalyzes the calcium-dependent hydrolysis of the 2-acyl groups in 3-sn-phosphoglycerides. The protein is Basic phospholipase A2 PA-11 of Pseudechis australis (Mulga snake).